A 59-amino-acid polypeptide reads, in one-letter code: Mu-conotoxin SrVA (59 aa).

The N-terminal stretch at 1–22 (MRCLPVFVILLLLIASAPSVDA) is a signal peptide. Residues 23 to 44 (QLKTKDDVPLASFHDNAKGTQH) constitute a propeptide that is removed on maturation. 2 cysteine pairs are disulfide-bonded: cysteine 51–cysteine 58 and cysteine 52–cysteine 59.

It belongs to the conotoxin T superfamily. In terms of tissue distribution, expressed by the venom duct.

Its subcellular location is the secreted. Mu-conotoxins block voltage-gated sodium channels. This peptide inhibits the cardiac sodium channel hNav1.5/SCN5A (33% inhibition at 200 nM, 50% at 400 nM, and 55% at 600 nM). Does not interfere with the voltage-dependence of activation, but affects the voltage-dependence of inactivation of hNav1.5. In vivo, intracranial injection into 9-day-old mice causes transient symptoms, including extension of the body and clockwise and counter-clockwise turns, that last 3 to 4 minutes. Intracranial injection into 16-day-old mice, causes transient symptoms, including agitated breathing and occasional turning followed by scratching and grooming behavior, that last for 15-19 minutes. In Conus spurius (Alphabet cone), this protein is Mu-conotoxin SrVA.